The chain runs to 371 residues: MAWTKYQLFLAGLMLVTGSINTLSAKWADNFMAEGCGGSKEHSFQHPFLQAVGMFLGEFSCLAAFYLLRCRAAGQSDSSVDPQQPFNPLLFLPPALCDMTGTSLMYVALNMTSASSFQMLRGAVIIFTGLFSVAFLGRRLVLSQWLGILATIAGLVVVGLADLLSKHDSQHKLSEVITGDLLIIMAQIIVAIQMVLEEKFVYKHNVHPLRAVGTEGLFGFVILSLLLVPMYYIPAGSFSGNPRGTLEDALDAFCQVGQQPLIAVALLGNISSIAFFNFAGISVTKELSATTRMVLDSLRTVVIWALSLALGWEAFHALQILGFLILLIGTALYNGLHRPLLGRLSRGRPLAEESEQERLLGGTRTPINDAS.

The first 18 residues, 1-18, serve as a signal peptide directing secretion; it reads MAWTKYQLFLAGLMLVTG. A run of 2 helical transmembrane segments spans residues 48 to 68 and 89 to 109; these read FLQA…FYLL and LLFL…YVAL. The region spanning 104 to 160 is the EamA domain; that stretch reads LMYVALNMTSASSFQMLRGAVIIFTGLFSVAFLGRRLVLSQWLGILATIAGLVVVGL. N-linked (GlcNAc...) asparagine glycosylation is present at Asn110. 7 helical membrane-spanning segments follow: residues 117–137, 140–160, 176–196, 216–236, 261–281, 295–312, and 317–336; these read FQML…AFLG, LVLS…VVGL, VITG…QMVL, GLFG…IPAG, LIAV…FAGI, LDSL…ALGW, and ALQI…YNGL. Positions 352–371 are disordered; sequence EESEQERLLGGTRTPINDAS. Thr365 is subject to Phosphothreonine.

It belongs to the SLC35F solute transporter family. In terms of assembly, interacts with SLC25A5. As to expression, expressed in pancreatic ductal adenocarcinoma (PDAC) (at protein level). Strongly expressed in prostate and thyroid. Weakly expressed in lung, heart, liver and kidney.

The protein localises to the mitochondrion. The protein resides in the lysosome membrane. Involved in the maintenance of mitochondrial membrane potential in pancreatic ductal adenocarcinoma (PDAC) cells. Promotes pancreatic ductal adenocarcinoma (PDAC) cell growth. May play a role as a nucleotide-sugar transporter. The chain is Solute carrier family 35 member F6 (SLC35F6) from Homo sapiens (Human).